Here is a 497-residue protein sequence, read N- to C-terminus: Cytochrome P450 71A18 (497 aa).

Residues 4-24 (TLMVSLCLTTLLTLLLLKKFL) form a helical membrane-spanning segment. A heme-binding site is contributed by Cys-439.

This sequence belongs to the cytochrome P450 family. Requires heme as cofactor.

The protein resides in the membrane. This chain is Cytochrome P450 71A18 (CYP71A18), found in Arabidopsis thaliana (Mouse-ear cress).